A 346-amino-acid chain; its full sequence is Porphobilinogen deaminase (346 aa).

Cysteine 242 carries the post-translational modification S-(dipyrrolylmethanemethyl)cysteine. Positions 317–346 are disordered; the sequence is ATEPGARSGTGAVRPPETDLSNPSPMENPQ. Over residues 335–346 the composition is skewed to polar residues; that stretch reads DLSNPSPMENPQ.

The protein belongs to the HMBS family. In terms of assembly, monomer. Dipyrromethane is required as a cofactor.

The catalysed reaction is 4 porphobilinogen + H2O = hydroxymethylbilane + 4 NH4(+). It functions in the pathway porphyrin-containing compound metabolism; protoporphyrin-IX biosynthesis; coproporphyrinogen-III from 5-aminolevulinate: step 2/4. Functionally, tetrapolymerization of the monopyrrole PBG into the hydroxymethylbilane pre-uroporphyrinogen in several discrete steps. This chain is Porphobilinogen deaminase, found in Nocardia farcinica (strain IFM 10152).